The sequence spans 360 residues: Ferredoxin--NADP reductase, leaf isozyme 1, chloroplastic (360 aa).

Residues 1–49 (MAAAISAAVSLPSSKSSSLLTKISSVSPQRIFLKKSTVCYRRVVSVKAQ) constitute a chloroplast transit peptide. Residues 81 to 203 (KNPYTGRCLL…TGPVGKEMLM (123 aa)) enclose the FAD-binding FR-type domain. FAD-binding positions include 139 to 142 (RLYS), 160 to 162 (CVK), tyrosine 166, and 177 to 179 (VCS). 2 residues coordinate NADP(+): serine 142 and lysine 162. Cysteine 178 and cysteine 183 are disulfide-bonded. Residue serine 179 is modified to Phosphoserine. Threonine 210 is modified (phosphothreonine). Position 218 (threonine 218) interacts with FAD. NADP(+) contacts are provided by residues threonine 218, 250-251 (VP), 280-281 (SR), lysine 290, 319-320 (GL), and glutamate 358.

Belongs to the ferredoxin--NADP reductase type 1 family. As to quaternary structure, heterodimer with LFNR2. Interacts with PGRL1A and PGRL1B. Interacts with TIC62. Component of high molecular weight thylakoid LFNRs-containing protein complexes containing LIR1, LFNR1, LFNR2, TIC62 and TROL proteins. Interacts directly with LIR1 and TIC62; LIR1 increases the affinity of LFNR1 and LFNR2 for TIC62. Binds to YCF54 in chloroplasts. The cofactor is FAD. In terms of processing, may form interchain disulfide bonds with LIR1. In terms of tissue distribution, expressed in shoots. Restricted to green tissues, being more abundant in siliques.

It localises to the plastid. The protein localises to the chloroplast stroma. It is found in the chloroplast thylakoid membrane. It carries out the reaction 2 reduced [2Fe-2S]-[ferredoxin] + NADP(+) + H(+) = 2 oxidized [2Fe-2S]-[ferredoxin] + NADPH. It functions in the pathway energy metabolism; photosynthesis. In terms of biological role, plays a key role in regulating the relative amounts of cyclic and non-cyclic electron flow to meet the demands of the plant for ATP and reducing power. Probable electron donor required for the MgProto monomethylester (MgProtoME) cyclase complex reaction to form protochlorophyllide, thus connecting chlorophyll synthesis with photosynthetic activity. The chain is Ferredoxin--NADP reductase, leaf isozyme 1, chloroplastic from Arabidopsis thaliana (Mouse-ear cress).